The chain runs to 163 residues: NADH-quinone oxidoreductase subunit I (163 aa).

2 consecutive 4Fe-4S ferredoxin-type domains span residues 53–83 (LRRYPNGEERCIACKLCEAICPALAITIEAG) and 94–123 (TRYDIDMTKCIYCGLCQEACPVDAIVEGPN). Cys-63, Cys-66, Cys-69, Cys-73, Cys-103, Cys-106, Cys-109, and Cys-113 together coordinate [4Fe-4S] cluster.

The protein belongs to the complex I 23 kDa subunit family. In terms of assembly, NDH-1 is composed of 14 different subunits. Subunits NuoA, H, J, K, L, M, N constitute the membrane sector of the complex. [4Fe-4S] cluster serves as cofactor.

It localises to the cell inner membrane. The enzyme catalyses a quinone + NADH + 5 H(+)(in) = a quinol + NAD(+) + 4 H(+)(out). NDH-1 shuttles electrons from NADH, via FMN and iron-sulfur (Fe-S) centers, to quinones in the respiratory chain. The immediate electron acceptor for the enzyme in this species is believed to be ubiquinone. Couples the redox reaction to proton translocation (for every two electrons transferred, four hydrogen ions are translocated across the cytoplasmic membrane), and thus conserves the redox energy in a proton gradient. The polypeptide is NADH-quinone oxidoreductase subunit I (Parvibaculum lavamentivorans (strain DS-1 / DSM 13023 / NCIMB 13966)).